Consider the following 269-residue polypeptide: Tryptophan synthase alpha chain (269 aa).

Catalysis depends on proton acceptor residues glutamate 50 and aspartate 61.

This sequence belongs to the TrpA family. As to quaternary structure, tetramer of two alpha and two beta chains.

The enzyme catalyses (1S,2R)-1-C-(indol-3-yl)glycerol 3-phosphate + L-serine = D-glyceraldehyde 3-phosphate + L-tryptophan + H2O. Its pathway is amino-acid biosynthesis; L-tryptophan biosynthesis; L-tryptophan from chorismate: step 5/5. The alpha subunit is responsible for the aldol cleavage of indoleglycerol phosphate to indole and glyceraldehyde 3-phosphate. This chain is Tryptophan synthase alpha chain, found in Buchnera aphidicola subsp. Baizongia pistaciae (strain Bp).